The primary structure comprises 369 residues: 3-dehydroquinate synthase (369 aa).

Residues Asp-80 to Lys-85, Gly-114 to Asp-118, Thr-138 to Thr-139, Lys-151, Lys-160, and Thr-178 to Thr-181 contribute to the NAD(+) site. Residues Glu-193, His-256, and His-273 each contribute to the Zn(2+) site.

It belongs to the sugar phosphate cyclases superfamily. Dehydroquinate synthase family. It depends on Co(2+) as a cofactor. The cofactor is Zn(2+). NAD(+) serves as cofactor.

It localises to the cytoplasm. The catalysed reaction is 7-phospho-2-dehydro-3-deoxy-D-arabino-heptonate = 3-dehydroquinate + phosphate. The protein operates within metabolic intermediate biosynthesis; chorismate biosynthesis; chorismate from D-erythrose 4-phosphate and phosphoenolpyruvate: step 2/7. Catalyzes the conversion of 3-deoxy-D-arabino-heptulosonate 7-phosphate (DAHP) to dehydroquinate (DHQ). The sequence is that of 3-dehydroquinate synthase from Psychrobacter cryohalolentis (strain ATCC BAA-1226 / DSM 17306 / VKM B-2378 / K5).